We begin with the raw amino-acid sequence, 430 residues long: Enolase (430 aa).

Glutamine 167 is a (2R)-2-phosphoglycerate binding site. Catalysis depends on glutamate 209, which acts as the Proton donor. Residues aspartate 245, glutamate 286, and aspartate 313 each contribute to the Mg(2+) site. Residues lysine 338, arginine 367, serine 368, and lysine 389 each contribute to the (2R)-2-phosphoglycerate site. The active-site Proton acceptor is the lysine 338.

Belongs to the enolase family. Mg(2+) serves as cofactor.

The protein localises to the cytoplasm. Its subcellular location is the secreted. The protein resides in the cell surface. It carries out the reaction (2R)-2-phosphoglycerate = phosphoenolpyruvate + H2O. The protein operates within carbohydrate degradation; glycolysis; pyruvate from D-glyceraldehyde 3-phosphate: step 4/5. In terms of biological role, catalyzes the reversible conversion of 2-phosphoglycerate (2-PG) into phosphoenolpyruvate (PEP). It is essential for the degradation of carbohydrates via glycolysis. The polypeptide is Enolase (Synechococcus sp. (strain WH7803)).